The primary structure comprises 367 residues: MTIFKRISSPALLALALFGGAAHAALVPPQGYYQGIEKLKTGEGNFRCEAAPKPYTGPLQFRSKYEGSDKARATLNAASEKAFRTSTEDITTLEKGVSKMVGQYMRDGRPAQLDCTLTWLGSWARAGALLSTDYNHTGKSMRKWALGSMSGSWLRLKFSNSQPLAAHQAEADLIEKWLSRLAEQTVRDWSDLPLEKINNHSYWAAWSVMATAVATDRRDLFDWAVKEYKVGANQVDDQGFLPNEIKRKQRALAYHNYALPPLAMIASFAQANGVDLRAENNFALQRLGEGVLAGARDPSHFKARAGKKQDMTDLKVDSKYSWLEPWCALYHCVGDTLERKHDMQPFNSFRLGGDVTRVYDPSAESKK.

The N-terminal stretch at 1–24 is a signal peptide; the sequence is MTIFKRISSPALLALALFGGAAHA. Substrate is bound by residues 63 to 64, 136 to 137, and tyrosine 254; these read SK and HT.

Belongs to the polysaccharide lyase 5 family.

It localises to the periplasm. It catalyses the reaction Eliminative cleavage of alginate to give oligosaccharides with 4-deoxy-alpha-L-erythro-hex-4-enuronosyl groups at their non-reducing ends and beta-D-mannuronate at their reducing end.. Catalyzes the depolymerization of alginate by cleaving the beta-1,4 glycosidic bond between two adjacent sugar residues via a beta-elimination mechanism. May serve to degrade mislocalized alginate that is trapped in the periplasmic space. This Pseudomonas putida (strain ATCC 700007 / DSM 6899 / JCM 31910 / BCRC 17059 / LMG 24140 / F1) protein is Alginate lyase.